The primary structure comprises 468 residues: Glutamate--tRNA ligase (468 aa).

Positions 14–24 (PSPTGFIHLGN) match the 'HIGH' region motif. The 'KMSKS' region motif lies at 246 to 250 (KMSKR). Position 249 (lysine 249) interacts with ATP.

The protein belongs to the class-I aminoacyl-tRNA synthetase family. Glutamate--tRNA ligase type 1 subfamily. In terms of assembly, monomer.

It is found in the cytoplasm. It carries out the reaction tRNA(Glu) + L-glutamate + ATP = L-glutamyl-tRNA(Glu) + AMP + diphosphate. Functionally, catalyzes the attachment of glutamate to tRNA(Glu) in a two-step reaction: glutamate is first activated by ATP to form Glu-AMP and then transferred to the acceptor end of tRNA(Glu). This chain is Glutamate--tRNA ligase, found in Leptothrix cholodnii (strain ATCC 51168 / LMG 8142 / SP-6) (Leptothrix discophora (strain SP-6)).